The sequence spans 698 residues: Capon-like protein (698 aa).

A PID domain is found at phenylalanine 25 to serine 194. Residues glutamate 191 to histidine 240 form a disordered region. Basic and acidic residues predominate over residues aspartate 201 to leucine 217. Coiled-coil stretches lie at residues arginine 265–leucine 327, asparagine 379–asparagine 484, and leucine 554–alanine 583. Over residues serine 396 to alanine 423 the composition is skewed to low complexity. Residues serine 396–alanine 460 form a disordered region. The span at tyrosine 436–asparagine 447 shows a compositional bias: polar residues. Positions glutamine 448–glutamine 458 are enriched in low complexity. Residues glycine 588–lysine 698 form a disordered region. Residues serine 590–serine 640 are compositionally biased toward low complexity. Composition is skewed to polar residues over residues leucine 662–serine 672 and asparagine 679–lysine 698.

Expressed at higher level in wing imaginal disk.

Functionally, putative adapter protein. This Drosophila melanogaster (Fruit fly) protein is Capon-like protein.